The primary structure comprises 191 residues: uncharacterized protein (191 aa).

The next 6 membrane-spanning stretches (helical) occupy residues isoleucine 4 to phenylalanine 24, lysine 26 to cysteine 46, glycine 68 to isoleucine 88, alanine 90 to isoleucine 110, leucine 135 to isoleucine 155, and leucine 168 to methionine 188.

It is found in the cell membrane. This is an uncharacterized protein from Methanocaldococcus jannaschii (strain ATCC 43067 / DSM 2661 / JAL-1 / JCM 10045 / NBRC 100440) (Methanococcus jannaschii).